A 344-amino-acid polypeptide reads, in one-letter code: uncharacterized protein (344 aa).

The first 19 residues, M1 to S19, serve as a signal peptide directing secretion. A propeptide spans S323–L344 (removed in mature form).

It localises to the cell membrane. This is an uncharacterized protein from Dictyostelium discoideum (Social amoeba).